A 716-amino-acid polypeptide reads, in one-letter code: Polyribonucleotide nucleotidyltransferase (716 aa).

Mg(2+) contacts are provided by Asp-495 and Asp-501. The KH domain maps to 562-621; that stretch reads PRLFRIQINPEQIGLVIGPGGKTIRSITEQTGAKIDIEDTGAVTISAVDADSALRAKSII. An S1 motif domain is found at 631–699; the sequence is GDVYIGKVTR…QKGRVNLTRK (69 aa).

The protein belongs to the polyribonucleotide nucleotidyltransferase family. It depends on Mg(2+) as a cofactor.

The protein resides in the cytoplasm. The catalysed reaction is RNA(n+1) + phosphate = RNA(n) + a ribonucleoside 5'-diphosphate. Involved in mRNA degradation. Catalyzes the phosphorolysis of single-stranded polyribonucleotides processively in the 3'- to 5'-direction. In Synechococcus sp. (strain ATCC 27144 / PCC 6301 / SAUG 1402/1) (Anacystis nidulans), this protein is Polyribonucleotide nucleotidyltransferase.